The following is a 309-amino-acid chain: 1,4-dihydroxy-2-naphthoyl-CoA synthase (309 aa).

Substrate is bound by residues R53, 98–102, Y110, 152–156, T179, S185, Y282, and K297; these read SGGDQ and WAAGG.

The protein belongs to the enoyl-CoA hydratase/isomerase family. MenB subfamily.

It carries out the reaction 2-succinylbenzoyl-CoA + H(+) = 1,4-dihydroxy-2-naphthoyl-CoA + H2O. The protein operates within quinol/quinone metabolism; 1,4-dihydroxy-2-naphthoate biosynthesis; 1,4-dihydroxy-2-naphthoate from chorismate: step 6/7. It functions in the pathway quinol/quinone metabolism; menaquinone biosynthesis. Functionally, converts o-succinylbenzoyl-CoA (OSB-CoA) to 1,4-dihydroxy-2-naphthoyl-CoA (DHNA-CoA). In Mycolicibacterium smegmatis (strain ATCC 700084 / mc(2)155) (Mycobacterium smegmatis), this protein is 1,4-dihydroxy-2-naphthoyl-CoA synthase.